The chain runs to 282 residues: Deoxyribonuclease-1 (282 aa).

The first 22 residues, 1 to 22, serve as a signal peptide directing secretion; sequence MRGTRLMGLLLALAGLLQLGLS. N40 is a glycosylation site (N-linked (GlcNAc...) asparagine). The active site involves E100. C123 and C126 are oxidised to a cystine. Residue H156 is part of the active site. Residues C195 and C231 are joined by a disulfide bond.

The protein belongs to the DNase I family. Requires Ca(2+) as cofactor. The cofactor is Mg(2+). Post-translationally, the only differences between the A and B forms and the C and D forms are in the compositions of the carbohydrate bound to Asn-40.

Its subcellular location is the secreted. It localises to the zymogen granule. It is found in the nucleus envelope. It carries out the reaction Endonucleolytic cleavage to 5'-phosphodinucleotide and 5'-phosphooligonucleotide end-products.. Its function is as follows. Serum endocuclease secreted into body fluids by a wide variety of exocrine and endocrine organs. Expressed by non-hematopoietic tissues and preferentially cleaves protein-free DNA. Among other functions, seems to be involved in cell death by apoptosis. Binds specifically to G-actin and blocks actin polymerization. Together with DNASE1L3, plays a key role in degrading neutrophil extracellular traps (NETs). NETs are mainly composed of DNA fibers and are released by neutrophils to bind pathogens during inflammation. Degradation of intravascular NETs by DNASE1 and DNASE1L3 is required to prevent formation of clots that obstruct blood vessels and cause organ damage following inflammation. The polypeptide is Deoxyribonuclease-1 (DNASE1) (Bos taurus (Bovine)).